A 98-amino-acid chain; its full sequence is Small ribosomal subunit protein eS24 (98 aa).

Belongs to the eukaryotic ribosomal protein eS24 family.

This chain is Small ribosomal subunit protein eS24 (rps2e), found in Thermoplasma acidophilum (strain ATCC 25905 / DSM 1728 / JCM 9062 / NBRC 15155 / AMRC-C165).